The chain runs to 115 residues: Tyrosine-protein phosphatase 23 (115 aa).

The Tyrosine-protein phosphatase domain maps to 1-115 (WMMIVEQKCR…EIGGDAPMVV (115 aa)). Asp83 contacts substrate.

This sequence belongs to the protein-tyrosine phosphatase family.

It catalyses the reaction O-phospho-L-tyrosyl-[protein] + H2O = L-tyrosyl-[protein] + phosphate. This chain is Tyrosine-protein phosphatase 23 (STY-23), found in Styela plicata (Wrinkled sea squirt).